A 582-amino-acid polypeptide reads, in one-letter code: Pineapple eye protein (582 aa).

The C2HC pre-PHD-type zinc-finger motif lies at 6–44; that stretch reads ELQCLICKYSDTDDLVFGEWMIVRNLQVHYFCLLLSTHL. The interval 6 to 119 is extended PHD domain (ePHD); that stretch reads ELQCLICKYS…QYKSYCYKCR (114 aa). The segment at 72-119 adopts a PHD-type; atypical zinc-finger fold; it reads RKCWYCNKIGASLQCDRCRSLFHLKCGLENRAVFEFCGQYKSYCYKCR. Disordered regions lie at residues 292–311 and 323–422; these read PART…DGSF and RSLT…ASEI. A compositionally biased stretch (polar residues) spans 340–363; that stretch reads SSNITVIFSQPKSNATSERLSLSP. Positions 383–399 are enriched in basic and acidic residues; that stretch reads SIDENHSPQPIARRDTS.

Functionally, required for survival of imaginal disk cells possibly by regulation of cell apoptosis. Required for germline stem cell self-renewal through mediation of BMP signaling. This Drosophila melanogaster (Fruit fly) protein is Pineapple eye protein.